The primary structure comprises 94 residues: MTDAVGSIDTPDAQDEVPESKKTRKGGKRAKKGPLKRLATFYRQIIAELRKVVWPTRNQLTSYTTVVIFFVAIMIRLVTVIDYGLNHAAKYVFG.

Positions Met-1–Lys-32 are disordered. Residues Lys-22–Lys-32 are compositionally biased toward basic residues. The helical transmembrane segment at Gln-59–Ile-81 threads the bilayer.

Belongs to the SecE/SEC61-gamma family. Component of the Sec protein translocase complex. Heterotrimer consisting of SecY, SecE and SecG subunits. The heterotrimers can form oligomers, although 1 heterotrimer is thought to be able to translocate proteins. Interacts with the ribosome. Interacts with SecDF, and other proteins may be involved. Interacts with SecA.

It is found in the cell membrane. Its function is as follows. Essential subunit of the Sec protein translocation channel SecYEG. Clamps together the 2 halves of SecY. May contact the channel plug during translocation. This is Protein translocase subunit SecE from Streptomyces galbus.